A 227-amino-acid polypeptide reads, in one-letter code: 2,3-bisphosphoglycerate-dependent phosphoglycerate mutase (227 aa).

Substrate contacts are provided by residues 7–14, 20–21, R59, 86–89, K97, 113–114, and 182–183; these read RHGFSEWN, TG, ERHY, RR, and GN. H8 functions as the Tele-phosphohistidine intermediate in the catalytic mechanism. E86 functions as the Proton donor/acceptor in the catalytic mechanism.

It belongs to the phosphoglycerate mutase family. BPG-dependent PGAM subfamily. Homodimer.

The catalysed reaction is (2R)-2-phosphoglycerate = (2R)-3-phosphoglycerate. Its pathway is carbohydrate degradation; glycolysis; pyruvate from D-glyceraldehyde 3-phosphate: step 3/5. In terms of biological role, catalyzes the interconversion of 2-phosphoglycerate and 3-phosphoglycerate. The chain is 2,3-bisphosphoglycerate-dependent phosphoglycerate mutase from Haemophilus influenzae (strain 86-028NP).